Reading from the N-terminus, the 449-residue chain is Phosphoglucosamine mutase (449 aa).

The active-site Phosphoserine intermediate is serine 101. Residues serine 101, aspartate 242, aspartate 244, and aspartate 246 each contribute to the Mg(2+) site. Serine 101 bears the Phosphoserine mark.

This sequence belongs to the phosphohexose mutase family. Requires Mg(2+) as cofactor. Post-translationally, activated by phosphorylation.

It carries out the reaction alpha-D-glucosamine 1-phosphate = D-glucosamine 6-phosphate. Catalyzes the conversion of glucosamine-6-phosphate to glucosamine-1-phosphate. This Bradyrhizobium sp. (strain ORS 278) protein is Phosphoglucosamine mutase.